The chain runs to 443 residues: Intermediate filament protein ifd-2 (443 aa).

Residues 1–58 are head; sequence MTDPLNPTRLQNHPALARIIESGRTNLPTGITTSGALSAYAQNAAAIIRDNREREKVE. An IF rod domain is found at 55–405; that stretch reads EKVEIADLNN…KLMENAEHLR (351 aa). Positions 59–90 are coil 1A; it reads IADLNNRLARYVEKVRFLEAQNRVLENDIGVF. The segment at 91–104 is linker 1; it reads RNAAHTHSERIAVY. The coil 1B stretch occupies residues 105–239; the sequence is FESEKASLFT…SQHDIAIREE (135 aa). The linker 12 stretch occupies residues 240 to 257; it reads ISKARRDTTNKNRDYFHN. The coil 2 stretch occupies residues 258-403; the sequence is ELHAAMKEIR…YRKLMENAEH (146 aa). A tail region spans residues 404 to 443; the sequence is LRTTVQTHVTYNAPPPPLPQSGPRTTSYHAYGSAYNDSLL.

Belongs to the intermediate filament family.

The protein resides in the cytoplasm. Functionally, cytoplasmic intermediate filaments provide mechanical strength to cells. Not essential protein. In Caenorhabditis elegans, this protein is Intermediate filament protein ifd-2 (ifd-2).